Consider the following 84-residue polypeptide: Small ribosomal subunit protein uS17 (84 aa).

This sequence belongs to the universal ribosomal protein uS17 family. Part of the 30S ribosomal subunit.

Functionally, one of the primary rRNA binding proteins, it binds specifically to the 5'-end of 16S ribosomal RNA. This chain is Small ribosomal subunit protein uS17, found in Yersinia enterocolitica serotype O:8 / biotype 1B (strain NCTC 13174 / 8081).